We begin with the raw amino-acid sequence, 389 residues long: S-adenosylmethionine synthase (389 aa).

ATP is bound at residue H18. Residue D20 coordinates Mg(2+). E46 contributes to the K(+) binding site. Positions 59 and 103 each coordinate L-methionine. Positions 103–113 are flexible loop; the sequence is QSADIAMGVDS. ATP-binding positions include 168-170, D244, 250-251, A267, and K271; these read DSK and RK. Residue D244 coordinates L-methionine. K275 contributes to the L-methionine binding site.

This sequence belongs to the AdoMet synthase family. In terms of assembly, homotetramer; dimer of dimers. Mg(2+) serves as cofactor. K(+) is required as a cofactor.

The protein localises to the cytoplasm. It carries out the reaction L-methionine + ATP + H2O = S-adenosyl-L-methionine + phosphate + diphosphate. Its pathway is amino-acid biosynthesis; S-adenosyl-L-methionine biosynthesis; S-adenosyl-L-methionine from L-methionine: step 1/1. Catalyzes the formation of S-adenosylmethionine (AdoMet) from methionine and ATP. The overall synthetic reaction is composed of two sequential steps, AdoMet formation and the subsequent tripolyphosphate hydrolysis which occurs prior to release of AdoMet from the enzyme. The protein is S-adenosylmethionine synthase of Pelagibacter ubique (strain HTCC1062).